Consider the following 357-residue polypeptide: Gene 58 protein (357 aa).

This sequence belongs to the herpesviridae BMRF2 family.

The polypeptide is Gene 58 protein (58) (Saimiri sciureus (Common squirrel monkey)).